Here is a 207-residue protein sequence, read N- to C-terminus: Ribonuclease HII (207 aa).

The RNase H type-2 domain maps to 12–201; the sequence is ALVAGVDEVG…VRELLDVVSI (190 aa). Positions 18, 19, and 110 each coordinate a divalent metal cation.

It belongs to the RNase HII family. Requires Mn(2+) as cofactor. The cofactor is Mg(2+).

Its subcellular location is the cytoplasm. The enzyme catalyses Endonucleolytic cleavage to 5'-phosphomonoester.. Functionally, endonuclease that specifically degrades the RNA of RNA-DNA hybrids. In Azotobacter vinelandii (strain DJ / ATCC BAA-1303), this protein is Ribonuclease HII.